Here is a 294-residue protein sequence, read N- to C-terminus: MDGKQGGMDGSKPAGPRDFPGIRLLSNPLMGDAVSDWSPMHEAAIHGHQLSLRNLISQGWAVNIITADHVSPLHEACLGGHLSCVKILLKHGAQVNGVTADWHTPLFNACVSGSWDCVNLLLQHGASVQPESDLASPIHEAARRGHVECVNSLIAYGGNIDHKISHLGTPLYLACENQQRACVKKLLESGADVNQGKGQDSPLHAVARTASEELACLLMDFGADTQAKNAEGKRPVELVPPESPLAQLFLEREGPPSLMQLCRLRIRKCFGIQQHHKITKLVLPEDLKQFLLHL.

The residue at position 1 (Met1) is an N-acetylmethionine. 6 ANK repeats span residues 35 to 64 (SDWS…AVNI), 68 to 97 (DHVS…QVNG), 101 to 130 (DWHT…SVQP), 133 to 162 (DLAS…NIDH), 166 to 195 (HLGT…DVNQ), and 198 to 227 (GQDS…DTQA). Ser51 is subject to Phosphoserine. An SOCS box domain is found at 240 to 294 (PPESPLAQLFLEREGPPSLMQLCRLRIRKCFGIQQHHKITKLVLPEDLKQFLLHL).

Belongs to the ankyrin SOCS box (ASB) family. Substrate-recognition component of the ECS(ASB9) complex, composed of ASB9, CUL5, ELOB, ELOC and RNF7/RBX2. Predominantly expressed in testis, kidney, and liver.

Its subcellular location is the mitochondrion. The protein operates within protein modification; protein ubiquitination. In terms of biological role, substrate-recognition component of a cullin-5-RING E3 ubiquitin-protein ligase complex (ECS complex, also named CRL5 complex), which mediates the ubiquitination and subsequent proteasomal degradation of target proteins. The ECS(ASB9) complex catalyzes ubiquitination of creatine kinases CKB and CKMT1A. Functionally, does not interact with the Elongin BC complex, likely to be a negative regulator of isoform 1. The protein is Ankyrin repeat and SOCS box protein 9 of Homo sapiens (Human).